We begin with the raw amino-acid sequence, 374 residues long: Tomoregulin-2 (374 aa).

The N-terminal stretch at 1–40 is a signal peptide; the sequence is MVLWESPRQCSSWTLCEGFCWLLLLPVMLLIVARPVKLAA. At 41–320 the chain is on the extracellular side; sequence FPTSLSDCQT…VPGPVRFQYV (280 aa). Kazal-like domains follow at residues 90-137 and 181-229; these read VCQF…SCAT and VCNI…RCQD. Intrachain disulfides connect cysteine 91–cysteine 121, cysteine 95–cysteine 114, cysteine 103–cysteine 135, cysteine 182–cysteine 213, cysteine 186–cysteine 206, and cysteine 195–cysteine 227. The N-linked (GlcNAc...) (complex) asparagine; atypical glycan is linked to asparagine 204. The N-linked (GlcNAc...) asparagine glycan is linked to asparagine 230. The 41-residue stretch at 261 to 301 folds into the EGF-like domain; it reads HHIPCPEHYNGFCMHGKCEHSINMQEPSCRCDAGYTGQHCE. Disulfide bonds link cysteine 265–cysteine 278, cysteine 273–cysteine 289, and cysteine 291–cysteine 300. The segment at 303 to 320 is required for shedding; sequence KDYSVLYVVPGPVRFQYV. The chain crosses the membrane as a helical span at residues 321–341; that stretch reads LIAAVIGTIQIAVICVVVLCI. At 342 to 374 the chain is on the cytoplasmic side; it reads TRKCPRSNRIHRQKQNTGHYSSDNTTRASTRLI. The disordered stretch occupies residues 353 to 374; that stretch reads RQKQNTGHYSSDNTTRASTRLI. Over residues 356-374 the composition is skewed to polar residues; that stretch reads QNTGHYSSDNTTRASTRLI.

It belongs to the tomoregulin family. In terms of processing, O-glycosylated; contains chondroitin sulfate glycosaminoglycans. A soluble form (TMEFF2-ECD) is produced by proteolytic shedding. This shedding can be induced by phorbol ester or pro-inflammatory cytokines such as TNFalpha, and is mediated by ADAM17. Highly expressed in adult and fetal brain, spinal cord and prostate. Expressed in all brain regions except the pituitary gland, with highest levels in amygdala and corpus callosum. Expressed in the pericryptal myofibroblasts and other stromal cells of normal colonic mucosa. Expressed in prostate carcinoma. Down-regulated in colorectal cancer. Present in Alzheimer disease plaques (at protein level). Isoform 3 is expressed weakly in testis and at high levels in normal and cancerous prostate.

It is found in the membrane. It localises to the secreted. In terms of biological role, may be a survival factor for hippocampal and mesencephalic neurons. The shedded form up-regulates cancer cell proliferation, probably by promoting ERK1/2 phosphorylation. In Homo sapiens (Human), this protein is Tomoregulin-2 (TMEFF2).